The following is a 644-amino-acid chain: Sodium/hydrogen exchanger 9 (644 aa).

At 1-20 the chain is on the lumenal side; it reads MERQRRFMSEKDEYQFQHQG. Residues 21–41 traverse the membrane as a helical segment; that stretch reads AVELLVFNFLLILTILTIWLF. Over 42-45 the chain is Cytoplasmic; the sequence is KNHR. The chain crosses the membrane as a helical span at residues 46–66; sequence FRFLHETGGAMVYGLIMGLIL. The Lumenal portion of the chain corresponds to 67–126; that stretch reads RYATAPTDIESGTVYDCGKLAFSPSTLLINITDQVYEYKYKREISQHNINPHLGNAILEK. Residues 127–147 traverse the membrane as a helical segment; it reads MTFDPEIFFNVLLPPIIFHAG. Over 148–164 the chain is Cytoplasmic; the sequence is YSLKKRHFFQNLGSILT. Residues 165–185 form a helical membrane-spanning segment; the sequence is YAFLGTAISCIVIGLIMYGFV. The Lumenal portion of the chain corresponds to 186-203; it reads KAMVYAGQLKNGDFHFTD. A helical membrane pass occupies residues 204–224; it reads CLFFGSLMSATDPVTVLAIFH. Topologically, residues 225–235 are cytoplasmic; it reads ELHVDPDLYTL. A helical membrane pass occupies residues 236 to 256; it reads LFGESVLNDAVAIVLTYSISI. Residues 257–277 are Lumenal-facing; that stretch reads YSPKENPNAFDAAAFFQSVGN. The chain crosses the membrane as a helical span at residues 278–298; sequence FLGIFAGSFAMGSAYAVVTAL. Over 299–301 the chain is Cytoplasmic; sequence LTK. A run of 2 helical transmembrane segments spans residues 302–322 and 323–343; these read FTKL…LSWS and AFLS…FCGV. The Cytoplasmic segment spans residues 344–364; the sequence is TQAHYTYNNLSLDSKMRTKQL. Residues 365 to 385 form a helical membrane-spanning segment; the sequence is FEFMNFLAENVIFCYMGLALF. Thr-386 is a topological domain (lumenal). Residues 387-407 traverse the membrane as a helical segment; it reads FQNHIFNALFILGAFLAIFVA. Residues 408 to 429 are Cytoplasmic-facing; it reads RACNIYPLSFLLNLGRKHKIPW. A helical membrane pass occupies residues 430–450; it reads NFQHMMMFSGLRGAIAFALAI. Residues 451–465 are Lumenal-facing; that stretch reads RDTESQPKQMMFSTT. A helical transmembrane segment spans residues 466-486; it reads LLLVFFTVWVFGGGTTPMLTW. Residues 487-644 are Cytoplasmic-facing; the sequence is LQIRVGVDLD…EQTPGQSQLN (158 aa). Positions 593-622 are disordered; that stretch reads QAASPCSPPTRLGLDQKAAPQTPGKENIYE.

The protein belongs to the monovalent cation:proton antiporter 1 (CPA1) transporter (TC 2.A.36) family. In terms of assembly, homodimer; phosphatidylinositol-4,5-bisphosphate (PIP2) and phosphatidylinositol 3,4,5-trisphosphate (PIP3) could be involved in the dimer stabilization. Interacts (via the C-terminus) with RACK1. Interacts with CHP1.

It localises to the late endosome membrane. The protein resides in the early endosome membrane. It is found in the recycling endosome membrane. The protein localises to the cell membrane. Its subcellular location is the cytoplasmic vesicle. It localises to the phagosome membrane. The catalysed reaction is Na(+)(in) + H(+)(out) = Na(+)(out) + H(+)(in). It catalyses the reaction K(+)(in) + H(+)(out) = K(+)(out) + H(+)(in). In terms of biological role, endosomal Na(+), K(+)/H(+) antiporter. Mediates the electroneutral exchange of endosomal luminal H(+) for a cytosolic Na(+) or K(+). By facilitating proton efflux, SLC9A9 counteracts the acidity generated by vacuolar (V)-ATPase, thereby limiting luminal acidification. Regulates organellar pH and consequently, endosome maturation and endocytic trafficking of plasma membrane receptors and neurotransporters. Promotes the recycling of transferrin receptors back to the cell surface to facilitate additional iron uptake in the brain. Regulates synaptic transmission by regulating the luminal pH of axonal endosomes. Regulates phagosome lumenal pH, thus affecting phagosome maturation, and consequently, microbicidal activity in macrophages. Can also be active at the cell surface of specialized cells, e.g., in the inner ear hair bundles uses the high K(+) of the endolymph to regulate intracelular pH. The protein is Sodium/hydrogen exchanger 9 (SLC9A9) of Equus caballus (Horse).